A 299-amino-acid polypeptide reads, in one-letter code: ATP synthase gamma chain (299 aa).

This sequence belongs to the ATPase gamma chain family. In terms of assembly, F-type ATPases have 2 components, CF(1) - the catalytic core - and CF(0) - the membrane proton channel. CF(1) has five subunits: alpha(3), beta(3), gamma(1), delta(1), epsilon(1). CF(0) has three main subunits: a, b and c.

It localises to the cell inner membrane. Its function is as follows. Produces ATP from ADP in the presence of a proton gradient across the membrane. The gamma chain is believed to be important in regulating ATPase activity and the flow of protons through the CF(0) complex. In Rhodospirillum rubrum, this protein is ATP synthase gamma chain.